A 333-amino-acid chain; its full sequence is Glycogenin-1 (333 aa).

Position 2 is an N-acetylthreonine (T2). Positions 9, 11, 12, and 15 each coordinate UDP. Residues L9, T11, N12, and Y15 each coordinate UDP-alpha-D-glucose. A Phosphoserine modification is found at S44. R77 contributes to the UDP binding site. Residues R77, K86, D102, A103, D104, N133, S134, D160, D163, and Q164 each contribute to the UDP-alpha-D-glucose site. UDP contacts are provided by D102, A103, and D104. D102 is a binding site for Mn(2+). Residue D104 coordinates Mn(2+). Residue Y195 is glycosylated (O-linked (Glc...) tyrosine). UDP-binding residues include H212, G215, and K218. H212 contributes to the Mn(2+) binding site. 2 residues coordinate UDP-alpha-D-glucose: G215 and K218. The tract at residues 284–316 is interaction with GYS1; the sequence is SDLSFGEAPAAPQPSMSSEERKERWEQGQADYM. The tract at residues 290–316 is disordered; it reads EAPAAPQPSMSSEERKERWEQGQADYM.

It belongs to the glycosyltransferase 8 family. Glycogenin subfamily. In terms of assembly, part of the GYS1-GYG1 complex, a heterooctamer composed of a tetramer of GYS1 and 2 dimers of GYG1, where each GYS1 protomer binds to one GYG1 subunit (via GYG1 C-terminus); the GYS1 tetramer may dissociate from GYG1 dimers to continue glycogen polymerization on its own. May also form a heterooctamer complex with GYS2. The cofactor is Mn(2+). Post-translationally, self-glycosylated by the transfer of glucose residues from UDP-glucose to itself, forming an alpha-1,4-glycan of around 10 residues attached to Tyr-195. In terms of processing, phosphorylated. As to expression, skeletal muscle, heart, to a lesser extent in kidney, lung and brain.

It localises to the cytoplasm. The protein resides in the nucleus. It catalyses the reaction L-tyrosyl-[glycogenin] + UDP-alpha-D-glucose = alpha-D-glucosyl-L-tyrosyl-[glycogenin] + UDP + H(+). The enzyme catalyses [1,4-alpha-D-glucosyl](n)-L-tyrosyl-[glycogenin] + UDP-alpha-D-glucose = [1,4-alpha-D-glucosyl](n+1)-L-tyrosyl-[glycogenin] + UDP + H(+). Its pathway is glycan biosynthesis; glycogen biosynthesis. Functionally, glycogenin participates in the glycogen biosynthetic process along with glycogen synthase and glycogen branching enzyme. It catalyzes the formation of a short alpha (1,4)-glucosyl chain covalently attached via a glucose 1-O-tyrosyl linkage to internal tyrosine residues and these chains act as primers for the elongation reaction catalyzed by glycogen synthase. The protein is Glycogenin-1 of Mus musculus (Mouse).